The chain runs to 104 residues: UPF0235 protein M446_3939 (104 aa).

The protein belongs to the UPF0235 family.

The chain is UPF0235 protein M446_3939 from Methylobacterium sp. (strain 4-46).